The sequence spans 281 residues: Phosphatidylglycerol--prolipoprotein diacylglyceryl transferase (281 aa).

Transmembrane regions (helical) follow at residues 23 to 43 (VGPL…MFAW), 71 to 91 (FVIW…VLFY), 107 to 127 (WDGG…MILF), and 133 to 153 (IKVW…LGVV). Arg-154 contributes to the a 1,2-diacyl-sn-glycero-3-phospho-(1'-sn-glycerol) binding site. 3 consecutive transmembrane segments (helical) span residues 189–209 (LYEA…LVWV), 217–237 (GFIA…VEFF), and 247–267 (LFGG…LIGL).

This sequence belongs to the Lgt family.

Its subcellular location is the cell inner membrane. It catalyses the reaction L-cysteinyl-[prolipoprotein] + a 1,2-diacyl-sn-glycero-3-phospho-(1'-sn-glycerol) = an S-1,2-diacyl-sn-glyceryl-L-cysteinyl-[prolipoprotein] + sn-glycerol 1-phosphate + H(+). It functions in the pathway protein modification; lipoprotein biosynthesis (diacylglyceryl transfer). Its function is as follows. Catalyzes the transfer of the diacylglyceryl group from phosphatidylglycerol to the sulfhydryl group of the N-terminal cysteine of a prolipoprotein, the first step in the formation of mature lipoproteins. The chain is Phosphatidylglycerol--prolipoprotein diacylglyceryl transferase from Brucella anthropi (strain ATCC 49188 / DSM 6882 / CCUG 24695 / JCM 21032 / LMG 3331 / NBRC 15819 / NCTC 12168 / Alc 37) (Ochrobactrum anthropi).